A 623-amino-acid polypeptide reads, in one-letter code: V-type proton ATPase catalytic subunit A (623 aa).

252–259 (GAFGCGKT) provides a ligand contact to ATP.

This sequence belongs to the ATPase alpha/beta chains family. V-ATPase is a heteromultimeric enzyme composed of a peripheral catalytic V1 complex (components A to H) attached to an integral membrane V0 proton pore complex (components: a, c, c'', d and e). Binds to the deubiquitinating enzyme AMSH3.

The protein resides in the vacuole membrane. The enzyme catalyses ATP + H2O + 4 H(+)(in) = ADP + phosphate + 5 H(+)(out). Catalytic subunit of the peripheral V1 complex of vacuolar ATPase. V-ATPase vacuolar ATPase is responsible for acidifying a variety of intracellular compartments in eukaryotic cells. The sequence is that of V-type proton ATPase catalytic subunit A (VHA-A) from Arabidopsis thaliana (Mouse-ear cress).